Consider the following 172-residue polypeptide: uncharacterized protein (172 aa).

A PfpI endopeptidase domain is found at 3–171 (KKVAIILTNE…FNREIVNQLN (169 aa)).

It belongs to the peptidase C56 family.

This is an uncharacterized protein from Staphylococcus saprophyticus subsp. saprophyticus (strain ATCC 15305 / DSM 20229 / NCIMB 8711 / NCTC 7292 / S-41).